Here is a 319-residue protein sequence, read N- to C-terminus: Serpentine receptor class X-43 (319 aa).

7 helical membrane passes run 28–48 (VVSM…IGCF), 67–87 (AQLM…LLNI), 95–115 (YLFG…FLLM), 138–158 (IRTF…YLVV), 164–184 (FVFY…CGTL), 194–214 (TVLS…LMAF), and 267–287 (FFFT…VVVF).

It belongs to the G-protein coupled receptor 1 family. In terms of tissue distribution, expressed in ASI sensory neurons.

The protein resides in the cell membrane. The protein localises to the perikaryon. It is found in the cell projection. Its subcellular location is the cilium. Functionally, receptor for the ascaroside pheromone icas#9 which suppresses exploratory forgaging behavior. In response to ascaroside icas#9, may furthermore play a role in the expression of genes in the TGF-beta signaling pathway, such as daf-7, and in insulin signaling pathway, such as daf-28, which may in turn contribute to exploratory behavior. This Caenorhabditis elegans protein is Serpentine receptor class X-43.